Here is a 230-residue protein sequence, read N- to C-terminus: MYIKMEVEFDEDTGALQIGGQEVFVMVFEPGQEVFDKSLDQHHQFPGVATSVVFPQLSIGTKVDVFTSSGGFGATDHHCFNYHVCNKRFVFGSVPALEIPADVREHLRIGAPITCADRLVSLVTAVHAADGAWLLRVTAARAGQVSGHARQQRRGAGRTVRAGRSVYGPVQLPYEQLKAHAFRKRRPRRDAAESCALFYNDSEVRITFNKGEFELMHWRLPGPLVSHGFK.

The active-site Proton donor is His-43. Residue Tyr-174 is the Shared with catalytic histidine of dimeric partner of the active site. Residue Lys-178 is the Proton acceptor; shared with catalytic histidine of dimeric partner of the active site.

The protein belongs to the poxin family. As to quaternary structure, homodimer.

It carries out the reaction 2',3'-cGAMP + H2O = Gp(2'-5')Ap(3') + H(+). Functionally, nuclease that cleaves host 2',3'-cGAMP. This Orgyia pseudotsugata multicapsid polyhedrosis virus (OpMNPV) protein is Poxin (P26).